Reading from the N-terminus, the 527-residue chain is Mitochondrial substrate carrier family protein V (527 aa).

The span at 1 to 14 (MNSSDFKKSFKEST) shows a compositional bias: basic and acidic residues. Positions 1 to 29 (MNSSDFKKSFKESTENNSNTYRPSKTLNT) are disordered. The Mitochondrial intermembrane portion of the chain corresponds to 1–132 (MNSSDFKKSF…VSKKSISKEN (132 aa)). Residues 15–29 (ENNSNTYRPSKTLNT) are compositionally biased toward polar residues. Solcar repeat units follow at residues 130–220 (KENV…CKKH), 253–345 (MTVP…FKII), and 430–519 (VNMI…CKDL). A helical transmembrane segment spans residues 133 to 153 (VNYLVSGSIAGAISRSATAGF). The Mitochondrial matrix segment spans residues 154-187 (ERLTIIQQVQGMSQNLSQGYVGCIAAMKEMVKRE). The chain crosses the membrane as a helical span at residues 188–208 (GFKSIWKGNGANIVKVSPNSG). The Mitochondrial intermembrane portion of the chain corresponds to 209–258 (IRFLTYEFCKKHFLDNSSNHPSSSSIENGIDGNGVGCGSGSEMKMTVPQT). A helical transmembrane segment spans residues 259–279 (MFSGAMAGLTSTFFTYPLDVV). Over 280 to 324 (RIRLSLQGSCSNDYAAHRYNGITHSFFKIHKDEGVKGLYKGLGTS) the chain is Mitochondrial matrix. The chain crosses the membrane as a helical span at residues 325 to 345 (IASIVPWVSISFATYEGFKII). At 346–435 (CKKMILNYQI…LKKGVNMICD (90 aa)) the chain is on the mitochondrial intermembrane side. The helical transmembrane segment at 436 to 456 (FVCGALSGAVTMTVCYPLDVL) threads the bilayer. Residues 457–487 (RRRMMIQGIGGNKVLYKNGWDATKKILSNEG) lie on the Mitochondrial matrix side of the membrane. Residues 488 to 508 (LVAFYHGIIPAYFKVVPTVAI) traverse the membrane as a helical segment. Residues 509–527 (SFAVYEICKDLGSNKYQQK) are Mitochondrial intermembrane-facing.

Belongs to the mitochondrial carrier (TC 2.A.29) family.

Its subcellular location is the mitochondrion inner membrane. Its function is as follows. Mitochondrial solute carriers shuttle metabolites, nucleotides, and cofactors through the mitochondrial inner membrane. In Dictyostelium discoideum (Social amoeba), this protein is Mitochondrial substrate carrier family protein V (mcfV).